Reading from the N-terminus, the 214-residue chain is Non-structural protein NP-1 (214 aa).

Disordered stretches follow at residues 1–87 (MSSE…TNPY) and 192–214 (ESEE…NASN). Positions 33–43 (SRSRSPIRRHG) are enriched in basic residues. Positions 44-55 (EKNLEYAHHSNQ) are enriched in basic and acidic residues. Positions 56 to 71 (ENRQSSYTALKTSDQA) are enriched in polar residues. Positions 192–201 (ESEEVTDEEM) are enriched in acidic residues.

It belongs to the Bocaparvovirus Non-structural protein NP-1 family.

Its subcellular location is the host nucleus. In terms of biological role, required for the expression of the capsid proteins. Performs the splicing and internal polyadenylation of the viral capsid-encoding mRNA precursor, which allows its maturation and expression. Transactivates the viral promoter. This is Non-structural protein NP-1 (NP1) from Human bocavirus 2 (HBoV2).